The sequence spans 785 residues: Arrestin domain-containing protein D (785 aa).

Disordered stretches follow at residues 29-69 (QNES…SKYP), 172-205 (ILLP…TTTT), 326-367 (SNNS…ITNN), 435-486 (SNSN…SDHN), and 608-642 (YSSS…LDEQ). Low complexity predominate over residues 173–205 (LLPTTTSTQNSTLSPTLLSSNLNSKSSTTTTTT). Residues 435–450 (SNSNSSSSGGSSNKNN) show a composition bias toward low complexity. Basic residues predominate over residues 466 to 478 (SNKKSSGSHRYHY). The span at 608–633 (YSSSGSGSGSGSSNSNSNHSSSNYLN) shows a compositional bias: low complexity. An FYVE-type zinc finger spans residues 682-742 (ESSITNCNLC…ICLMCFDAVK (61 aa)). Cysteine 688, cysteine 691, cysteine 704, cysteine 707, cysteine 712, cysteine 715, cysteine 734, and cysteine 737 together coordinate Zn(2+). The RING-type; degenerate zinc-finger motif lies at 688–738 (CNLCDNTFTIIRRTHHCRACGGVFCEACSNQKVCLYGFGVNNKVRICLMCF).

It belongs to the arrestin family.

In Dictyostelium discoideum (Social amoeba), this protein is Arrestin domain-containing protein D (adcD).